The chain runs to 382 residues: Na(+)/H(+) antiporter NhaA (382 aa).

The next 11 helical transmembrane spans lie at 14–34, 47–67, 87–107, 117–137, 146–166, 171–191, 205–225, 247–267, 271–291, 321–341, and 353–373; these read AGGI…NSAM, FGMS…FLLI, IFPA…YVAF, GWAI…ALLG, VFLL…IALF, LSTI…MLNA, LILW…GVVI, ALHP…NAGI, GVSL…GLFL, IFAV…ISSL, and YARL…YSLL.

This sequence belongs to the NhaA Na(+)/H(+) (TC 2.A.33) antiporter family.

Its subcellular location is the cell inner membrane. It carries out the reaction Na(+)(in) + 2 H(+)(out) = Na(+)(out) + 2 H(+)(in). In terms of biological role, na(+)/H(+) antiporter that extrudes sodium in exchange for external protons. The protein is Na(+)/H(+) antiporter NhaA of Vibrio cholerae serotype O1 (strain ATCC 39541 / Classical Ogawa 395 / O395).